A 604-amino-acid polypeptide reads, in one-letter code: Glutamine--fructose-6-phosphate aminotransferase [isomerizing] (604 aa).

The Nucleophile; for GATase activity role is filled by cysteine 2. The Glutamine amidotransferase type-2 domain maps to 2–216; the sequence is CGIVGYVGFR…DGDVVRLTRE (215 aa). SIS domains follow at residues 281-420 and 453-594; these read LALD…ARGA and VAEK…VDQP. Residue lysine 599 is the For Fru-6P isomerization activity of the active site.

In terms of assembly, homodimer.

It localises to the cytoplasm. It catalyses the reaction D-fructose 6-phosphate + L-glutamine = D-glucosamine 6-phosphate + L-glutamate. In terms of biological role, catalyzes the first step in hexosamine metabolism, converting fructose-6P into glucosamine-6P using glutamine as a nitrogen source. The sequence is that of Glutamine--fructose-6-phosphate aminotransferase [isomerizing] from Thermus thermophilus (strain ATCC BAA-163 / DSM 7039 / HB27).